We begin with the raw amino-acid sequence, 251 residues long: Adenosylcobinamide-GDP ribazoletransferase (251 aa).

6 consecutive transmembrane segments (helical) span residues 36–56 (LYPF…FVLS), 60–80 (VPIM…TGFL), 110–130 (VGAF…AGIF), 181–201 (EIIL…TLGI), 202–222 (NYLI…LKVK), and 231–251 (DVAG…LGII).

Belongs to the CobS family. Requires Mg(2+) as cofactor.

The protein localises to the cell membrane. The catalysed reaction is alpha-ribazole + adenosylcob(III)inamide-GDP = adenosylcob(III)alamin + GMP + H(+). The enzyme catalyses alpha-ribazole 5'-phosphate + adenosylcob(III)inamide-GDP = adenosylcob(III)alamin 5'-phosphate + GMP + H(+). Its pathway is cofactor biosynthesis; adenosylcobalamin biosynthesis; adenosylcobalamin from cob(II)yrinate a,c-diamide: step 7/7. Joins adenosylcobinamide-GDP and alpha-ribazole to generate adenosylcobalamin (Ado-cobalamin). Also synthesizes adenosylcobalamin 5'-phosphate from adenosylcobinamide-GDP and alpha-ribazole 5'-phosphate. The polypeptide is Adenosylcobinamide-GDP ribazoletransferase (Clostridium perfringens (strain SM101 / Type A)).